A 194-amino-acid polypeptide reads, in one-letter code: Cation channel sperm-associated auxiliary subunit zeta (194 aa).

Component of the CatSper complex or CatSpermasome composed of the core pore-forming members CATSPER1, CATSPER2, CATSPER3 and CATSPER4 as well as auxiliary members CATSPERB, CATSPERG2, CATSPERD, CATSPERE, CATSPERZ, C2CD6/CATSPERT, SLCO6C1, TMEM249, TMEM262 and EFCAB9. HSPA1 may be an additional auxiliary complex member. The core complex members CATSPER1, CATSPER2, CATSPER3 and CATSPER4 form a heterotetrameric channel. The auxiliary CATSPERB, CATSPERG2, CATSPERD and CATSPERE subunits form a pavilion-like structure over the pore which stabilizes the complex through interactions with CATSPER4, CATSPER3, CATSPER1 and CATSPER2 respectively. SLCO6C1 interacts with CATSPERE and TMEM262/CATSPERH interacts with CATSPERB, further stabilizing the complex. C2CD6/CATSPERT interacts at least with CATSPERD and is required for targeting the CatSper complex in the flagellar membrane. Interacts with EFCAB9; the interaction is direct, Ca(2+)-dependent and connects EFCAB9 with the CatSper complex. Dissociates from EFCAB9 at elevated pH. As to expression, testis-specific. Expressed in adult but not in fetal testis. Not expressed in ovary. Within testis, expression is restricted to spermatids.

Its subcellular location is the cell projection. It localises to the cilium. It is found in the flagellum membrane. In terms of biological role, auxiliary component of the CatSper complex, a complex involved in sperm cell hyperactivation. Sperm cell hyperactivation is needed for sperm motility which is essential late in the preparation of sperm for fertilization. Required for a distribution of the CatSper complex in linear quadrilateral nanodomains along the flagellum, maximizing fertilization inside the mammalian female reproductive tract. Together with EFCAB9, associates with the CatSper channel pore and is required for the two-row structure of each single CatSper channel. This is Cation channel sperm-associated auxiliary subunit zeta from Mus musculus (Mouse).